We begin with the raw amino-acid sequence, 360 residues long: Ethanolamine-phosphate cytidylyltransferase (360 aa).

CTP is bound by residues Gly207 to Phe208, His215 to Ala218, Lys243, His291 to Asp294, and His321 to Leu325.

Belongs to the cytidylyltransferase family.

It catalyses the reaction phosphoethanolamine + CTP + H(+) = CDP-ethanolamine + diphosphate. The protein operates within phospholipid metabolism; phosphatidylethanolamine biosynthesis; phosphatidylethanolamine from ethanolamine: step 2/3. Its function is as follows. Ethanolamine-phosphate cytidylyltransferase that catalyzes the second step in the synthesis of phosphatidylethanolamine (PE) from ethanolamine via the CDP-ethanolamine pathway. The protein is Ethanolamine-phosphate cytidylyltransferase (pctA) of Dictyostelium discoideum (Social amoeba).